Reading from the N-terminus, the 62-residue chain is Photosystem II reaction center protein Z (62 aa).

Transmembrane regions (helical) follow at residues 8-28 (AVFASIAIPFILVIGVPVVLA) and 41-61 (FSGASSWIGLVFLVGILNSLI).

Belongs to the PsbZ family. As to quaternary structure, PSII is composed of 1 copy each of membrane proteins PsbA, PsbB, PsbC, PsbD, PsbE, PsbF, PsbH, PsbI, PsbJ, PsbK, PsbL, PsbM, PsbT, PsbY, PsbZ, Psb30/Ycf12, at least 3 peripheral proteins of the oxygen-evolving complex and a large number of cofactors. It forms dimeric complexes.

The protein localises to the plastid. It is found in the chloroplast thylakoid membrane. May control the interaction of photosystem II (PSII) cores with the light-harvesting antenna, regulates electron flow through the 2 photosystem reaction centers. PSII is a light-driven water plastoquinone oxidoreductase, using light energy to abstract electrons from H(2)O, generating a proton gradient subsequently used for ATP formation. In Huperzia lucidula (Shining clubmoss), this protein is Photosystem II reaction center protein Z.